Reading from the N-terminus, the 424-residue chain is CinA-like protein (424 aa).

This sequence belongs to the CinA family.

This chain is CinA-like protein, found in Prochlorococcus marinus (strain MIT 9301).